The sequence spans 179 residues: uncharacterized protein (179 aa).

This is an uncharacterized protein from Galliformes (FAdV-1).